The primary structure comprises 214 residues: Endothelin-3 (214 aa).

A signal peptide spans 1–16 (MEPGLWLLLGLTVTSA). The propeptide occupies 17-94 (AGLVPCPQSG…DKGLPAHHRP (78 aa)). Residues 24 to 91 (QSGDSGRASV…KQEDKGLPAH (68 aa)) form a disordered region. Over residues 25–35 (SGDSGRASVSQ) the composition is skewed to polar residues. Cystine bridges form between cysteine 97–cysteine 111 and cysteine 99–cysteine 107. The propeptide occupies 118–214 (INTPEQTVPY…MSRTDKAHRP (97 aa)). Residues 159 to 173 (CTCMGADDKACAHFC) are endothelin-like. Residues 183 to 214 (SGRAERPAAEEMRETGGPRQRLMSRTDKAHRP) form a disordered region. The span at 185-198 (RAERPAAEEMRETG) shows a compositional bias: basic and acidic residues.

Belongs to the endothelin/sarafotoxin family.

The protein resides in the secreted. In terms of biological role, endothelins are endothelium-derived vasoconstrictor peptides. This Mus musculus (Mouse) protein is Endothelin-3 (Edn3).